Here is a 1031-residue protein sequence, read N- to C-terminus: Error-prone DNA polymerase (1031 aa).

Belongs to the DNA polymerase type-C family. DnaE2 subfamily.

Its subcellular location is the cytoplasm. The enzyme catalyses DNA(n) + a 2'-deoxyribonucleoside 5'-triphosphate = DNA(n+1) + diphosphate. Functionally, DNA polymerase involved in damage-induced mutagenesis and translesion synthesis (TLS). It is not the major replicative DNA polymerase. This chain is Error-prone DNA polymerase, found in Pseudomonas syringae pv. syringae (strain B728a).